A 2287-amino-acid chain; its full sequence is MKRHQFKSWIFELREIKNSHYFLDSWTKFDSVGSFTHIFFHQERFMKLFDPRIWSILLSRDSQGSTSNRYFTIKGVVLLVVVVLIYRINNRNMVERKNLYLMGLLPIPMNSIGPRNDTLEESFWSSNLNRLIVSLLYLPKGKKISESCFMDPKESTWVLPITKKCIMPESNWGSRWWRNRIGKKRDSSCKISNETVAGIEISFKEKDIKYLEFLFVSYTDDPIRKDHDWEFFDRLSPRKKRNIINLNSGQLFEILVKHLICYLMSAFREKRPIEVEGFFKQQGAEATIQSNDIEHVSHLFSRNKRGISLQNCAQFHMWQFRQDLFVSWGKNRHELDFLRNVSRENLIWLDNVWLVNKDRFFSKVRNVSSNIQYDSTRSIFVQVTDSSQLKGSSDQSRDPFDSISNEDSEYHTLINQTEIQQLKERSILWGPSFLQTERTEIESDRLLKCLSGYSSMSRLFTEREKQMNNHLLPEEIEEFLGNPTRSIRSFFSDRWSELHLGSNPTERSTRDHKLLKKQQDVSFVPSRRSENQEIVDIFKIITYLQNTVSIHPISSDPGCDMVPKDEPDMDSSNKISFLNKNPFLDLFHLFHDRNKGGYRLHHDFESEERFQEMADLFTLSITEPGLVDHKGFAFSIDSYGLDQKKFLNEVFNSRDESKKKSLLVLPPIFYEENESFYRRIRKKSVRISCGNDLEDPKPKIVVFANNNIMEAVNQYRLIRNLMQIQYSTYGYIRNVSNRFFLMNRSDRNFEYGIQRDQIGNDTLNHLTIIKYTINQHLSNLKKSQKKWFDPLISRTERSMNRDPDAYRYKWSNGSKNFQEHLEHFVSEQKHRFQVVFDRLRINQYSIDWSEVIDKQDLSKSLRFFLSKSLLFLSKSLLFLSKSLPFFFVSIGNIPIHRSEIHIYELKGPNDQLCNQLLESIGVQIVHLNKLKPFLLDDHDTSQRSKFLINGGTISPNKIPKWMIDSFHTRNNRRKSFENTDSYFSMISHDRDNWLNPVKPFHRSSLISSFYKANRLRFLNHPHHFWFYCNKGFPFYVEKTRINNYDLTYGQFLNILFIRNKIFSLCVGKKKHVFLERDTISPIESQVSDIFIPNDFPQSGDETYNLYKSFHFPIRSDPFVRRAIYSIADISGTPLTEEQIVNFERTYCQPLSDMNLSDSEGKNLHQYLSFNSNMGLIHTPCSEKYLPSGKRKKRSLCLKKCVEKRQMDRTFQRDSAFSNLSKWNLFQTYMPWFLTSTGCKYLNLTLLDTFSDPLPILSSSQKFVSIFHDIMHGSDISWPIPQKKLWAILPQWNLISESSSKCLQNLLLSEEMIHRNNESPVPLIWTHLRSPNAWEFLYSILFLFLVAGYLVRTHLLFVSRASSELQTGLERIKSLMIPSYMIELRKLLDRYPTSEPNSFWLKNLFLVALEQLGDSLEKIRGSASGGNMLLGGGPAYGVKSIRSKKKYLNINLIDLISIIPNPINRITFSRNTRHLSRTSKEIYSLIRKRKNVNGDWIDDKIESWVANSDSIDDEEREFLVQFSTLTTEKGIDQILLSLTHSDHLSKNDSGYQMIEQPGSIYLRYLVDIHKKYLMNYEFNRSCLAERRIFLAHYQTITYSQTSCGANSSHFPSHGKPFSLRLALSPSRGILVIGSIGTGRSYLVKYLATNSYVPFITVFPNKFLDDKPKGYRIDDIDIDDSDDIDIDDSDDIDDDLDTELLTMTNVLTMYMTPKIDRFDITLQFELAKAMSPCIIWIPNIHDLYVNESNYLSLGLLVNYLSRDCERCSTRNILVIASTHIPQKVDPALIAPNKSNTCIKIRRLLIPQQRKHFFILSYTRGFHLEKKMFHTNGFGSITMGSNARDLVALTNEALSISITQKKSIIDTNTIRSALHRQTWDLRSQVRSVQDHGILFYQIGRAVAQNVLLSNCPIDPISIYMKKKSCKEGDSYLYKWYFELGTSMKKLTILLYLLSCSAGSVAQDLWSPPGPDEKNWITSYGFVENDSDLVHGLLEVEGALLGSSRTEKDCSQFDNDRVTLFLRSEPRNPLDMMQNGSCSIVDQRFLYEKYESEFEEGEREGALDPQQIEEDLFNHIVWAPRIWRPCGNLFDCIERTNELGFPYWARSFRGKRIIYHKEDELQENDSEFLQSGTMQYQTRDRSSKEQGFFRISQFIWDPADPFFFLFKDQPFVSVFSRREFFADEEMSKGLITSQTNPPTSIYKRWFIKNTQEKHFELLIHRQRWLRTNSSLSNGSFRSNTPSESYQYLSNLFLSNGTLLDQIAKALLRKRWLFPDEMKHLIHVTGERFPIP.

1632–1639 (GSIGTGRS) contacts ATP.

This sequence belongs to the Ycf2 family.

It localises to the plastid. It is found in the chloroplast stroma. Probable ATPase of unknown function. Its presence in a non-photosynthetic plant (Epifagus virginiana) and experiments in tobacco indicate that it has an essential function which is probably not related to photosynthesis. This chain is Protein Ycf2, found in Calycanthus floridus var. glaucus (Eastern sweetshrub).